The sequence spans 220 residues: UPF0502 protein VVA1225 (220 aa).

Belongs to the UPF0502 family.

This is UPF0502 protein VVA1225 from Vibrio vulnificus (strain YJ016).